Here is a 357-residue protein sequence, read N- to C-terminus: UDP-N-acetylglucosamine--N-acetylmuramyl-(pentapeptide) pyrophosphoryl-undecaprenol N-acetylglucosamine transferase (357 aa).

Residues 13-15 (TGG), asparagine 125, arginine 161, serine 189, isoleucine 243, and glutamine 288 each bind UDP-N-acetyl-alpha-D-glucosamine.

This sequence belongs to the glycosyltransferase 28 family. MurG subfamily.

The protein resides in the cell inner membrane. The enzyme catalyses di-trans,octa-cis-undecaprenyl diphospho-N-acetyl-alpha-D-muramoyl-L-alanyl-D-glutamyl-meso-2,6-diaminopimeloyl-D-alanyl-D-alanine + UDP-N-acetyl-alpha-D-glucosamine = di-trans,octa-cis-undecaprenyl diphospho-[N-acetyl-alpha-D-glucosaminyl-(1-&gt;4)]-N-acetyl-alpha-D-muramoyl-L-alanyl-D-glutamyl-meso-2,6-diaminopimeloyl-D-alanyl-D-alanine + UDP + H(+). It functions in the pathway cell wall biogenesis; peptidoglycan biosynthesis. In terms of biological role, cell wall formation. Catalyzes the transfer of a GlcNAc subunit on undecaprenyl-pyrophosphoryl-MurNAc-pentapeptide (lipid intermediate I) to form undecaprenyl-pyrophosphoryl-MurNAc-(pentapeptide)GlcNAc (lipid intermediate II). The polypeptide is UDP-N-acetylglucosamine--N-acetylmuramyl-(pentapeptide) pyrophosphoryl-undecaprenol N-acetylglucosamine transferase (Bordetella pertussis (strain Tohama I / ATCC BAA-589 / NCTC 13251)).